The sequence spans 452 residues: Enolase (452 aa).

A (2R)-2-phosphoglycerate-binding site is contributed by Gln-167. The active-site Proton donor is the Glu-209. Mg(2+) is bound by residues Asp-250, Glu-307, and Asp-334. (2R)-2-phosphoglycerate is bound by residues Lys-359, Arg-388, Ser-389, and Lys-410. Catalysis depends on Lys-359, which acts as the Proton acceptor.

This sequence belongs to the enolase family. Mg(2+) is required as a cofactor.

The protein resides in the cytoplasm. Its subcellular location is the secreted. It is found in the cell surface. It carries out the reaction (2R)-2-phosphoglycerate = phosphoenolpyruvate + H2O. It functions in the pathway carbohydrate degradation; glycolysis; pyruvate from D-glyceraldehyde 3-phosphate: step 4/5. Its function is as follows. Catalyzes the reversible conversion of 2-phosphoglycerate (2-PG) into phosphoenolpyruvate (PEP). It is essential for the degradation of carbohydrates via glycolysis. This is Enolase from Mesomycoplasma hyopneumoniae (strain 232) (Mycoplasma hyopneumoniae).